A 249-amino-acid polypeptide reads, in one-letter code: BPI fold-containing family A member 1 (249 aa).

An N-terminal signal peptide occupies residues methionine 1–alanine 15. Residues leucine 81–leucine 86 form an important for surfactant activity and antibacterial properties region. A glycan (N-linked (GlcNAc...) asparagine) is linked at asparagine 151. An intrachain disulfide couples cysteine 173 to cysteine 217.

It belongs to the BPI/LBP/Plunc superfamily. Plunc family. Monomer. Interacts (via N-terminus) with SCNN1B, a subunit of the heterotrimeric epithelial sodium channel (ENaC); this inhibits proteolytic activation of ENaC. In terms of tissue distribution, expressed in lung and trachea.

The protein localises to the secreted. Its function is as follows. Lipid-binding protein which shows high specificity for the surfactant phospholipid dipalmitoylphosphatidylcholine (DPPC). Plays a role in the innate immune responses of the upper airways. Reduces the surface tension in secretions from airway epithelia and inhibits the formation of biofilm by pathogenic Gram-negative bacteria, such as P.aeruginosa and K.pneumoniae. Negatively regulates proteolytic cleavage of SCNN1G, an event that is required for activation of the epithelial sodium channel (ENaC), and thereby contributes to airway surface liquid homeostasis and proper clearance of mucus. Plays a role in the airway inflammatory response after exposure to irritants. May attract macrophages and neutrophils. The polypeptide is BPI fold-containing family A member 1 (BPIFA1) (Sus scrofa (Pig)).